The chain runs to 524 residues: Fusicoccadiene C-8 hydroxylase (524 aa).

A helical transmembrane segment spans residues 16–36 (LQLLCIGPLVYACVSFIIKIV). 2 N-linked (GlcNAc...) asparagine glycosylation sites follow: asparagine 126 and asparagine 344. A heme-binding site is contributed by cysteine 465. N-linked (GlcNAc...) asparagine glycosylation is present at asparagine 496.

The protein belongs to the cytochrome P450 family. Heme is required as a cofactor.

Its subcellular location is the membrane. It participates in mycotoxin biosynthesis. Cytochrome P450 monooxygenase; part of the 2 gene clusters that mediate the biosynthesis of fusicoccins, diterpene glucosides that display phytohormone-like activity and function as potent activators of plasma membrane H(+)-ATPases in plants by modifying 14-3-3 proteins and cause the plant disease constriction canker. The first step in the pathway is performed by the fusicoccadiene synthase PaFS that possesses both prenyl transferase and terpene cyclase activity, converting isopentenyl diphosphate and dimethylallyl diphosphate into geranylgeranyl diphosphate (GGDP) and successively converting GGDP into fusicocca-2,10(14)-diene, a precursor for fusicoccin H. The second step is the oxidation at the C-8 position by the cytochrome P450 monooxygenase PaP450-2 to yield fusicocca-2,10(14)-diene-8-beta-ol. The cytochrome P450 monooxygenase PaP450-1 then catalyzes the hydroxylation at the C-16 position to produce fusicocca-2,10(14)-diene-8-beta,16-diol. The dioxygenase fc-dox then catalyzes the 16-oxydation of fusicocca-2,10(14)-diene-8-beta,16-diol to yield an aldehyde (8-beta-hydroxyfusicocca-1,10(14)-dien-16-al). The short-chain dehydrogenase/reductase fc-sdr catalyzes the reduction of the aldehyde to yield fusicocca-1,10(14)-diene-8-beta,16-diol. The next step is the hydroxylation at C-9 performed by the cytochrome P450 monooxygenase PaP450-3 that leads to fusicoccin H aglycon which is glycosylated to fusicoccin H by the O-glycosyltransferase PaGT. Hydroxylation at C-12 by the cytochrome P450 monooxygenase PaP450-4 leads then to the production of fusicoccin Q and is followed by methylation by the O-methyltransferase PaMT to yield fusicoccin P. Fusicoccin P is further converted to fusicoccin J via prenylation by the O-glucose prenyltransferase PaPT. Cytochrome P450 monooxygenase PaP450-5 then performs hydroxylation at C-19 to yield dideacetyl-fusicoccin A which is acetylated to 3'-O-deacetyl-fusicoccin A by the O-acetyltransferase PaAT-2. Finally, a another acetylation by the O-acetyltransferase PaAT-1 yields fusicoccin A. This Phomopsis amygdali (Fusicoccum amygdali) protein is Fusicoccadiene C-8 hydroxylase.